A 524-amino-acid chain; its full sequence is Cytochrome P450 4F11 (524 aa).

A helical membrane pass occupies residues 15–37; sequence AASPWLLLLLVGGSWLLARVLAW. 4-hydroxynonenal-conjugated cysteine occurs at positions 45 and 260. H261 bears the 4-hydroxynonenal-conjugated histidine mark. E328 lines the heme pocket. Residue H347 is modified to 4-hydroxynonenal-conjugated histidine. C354 carries the post-translational modification 4-hydroxynonenal-conjugated cysteine. Position 451 is a 4-hydroxynonenal-conjugated lysine (K451). Residue C468 coordinates heme.

It belongs to the cytochrome P450 family. Requires heme as cofactor. In terms of processing, 4-hydroxynonenal conjugation impairs substrate binding and the long-chain fatty acid omega-monooxygenase activity. In terms of tissue distribution, expressed mainly in human liver, followed by kidney, heart, and skeletal muscle.

The protein resides in the endoplasmic reticulum membrane. The protein localises to the microsome membrane. The catalysed reaction is an organic molecule + reduced [NADPH--hemoprotein reductase] + O2 = an alcohol + oxidized [NADPH--hemoprotein reductase] + H2O + H(+). The enzyme catalyses an omega-methyl-long-chain fatty acid + reduced [NADPH--hemoprotein reductase] + O2 = an omega-hydroxy-long-chain fatty acid + oxidized [NADPH--hemoprotein reductase] + H2O + H(+). It catalyses the reaction dodecanoate + reduced [NADPH--hemoprotein reductase] + O2 = 12-hydroxydodecanoate + oxidized [NADPH--hemoprotein reductase] + H2O + H(+). It carries out the reaction hexadecanoate + reduced [NADPH--hemoprotein reductase] + O2 = 16-hydroxyhexadecanoate + oxidized [NADPH--hemoprotein reductase] + H2O + H(+). The catalysed reaction is (9Z)-octadecenoate + reduced [NADPH--hemoprotein reductase] + O2 = 18-hydroxy-(9Z)-octadecenoate + oxidized [NADPH--hemoprotein reductase] + H2O + H(+). The enzyme catalyses (5Z,8Z,11Z,14Z)-eicosatetraenoate + reduced [NADPH--hemoprotein reductase] + O2 = 20-hydroxy-(5Z,8Z,11Z,14Z)-eicosatetraenoate + oxidized [NADPH--hemoprotein reductase] + H2O + H(+). It catalyses the reaction (4Z,7Z,10Z,13Z,16Z,19Z)-docosahexaenoate + reduced [NADPH--hemoprotein reductase] + O2 = 22-hydroxy-(4Z,7Z,10Z,13Z,16Z,19Z)-docosahexaenoate + oxidized [NADPH--hemoprotein reductase] + H2O + H(+). It carries out the reaction 8-hydroxy-(5Z,9E,11Z,14Z)-eicosatetraenoate + reduced [NADPH--hemoprotein reductase] + O2 = 8,20-dihydroxy-(5Z,9E,11Z,14Z)-eicosatetraenoate + oxidized [NADPH--hemoprotein reductase] + H2O + H(+). The catalysed reaction is 3-hydroxyhexadecanoate + reduced [NADPH--hemoprotein reductase] + O2 = 3,16-dihydroxyhexadecanoate + oxidized [NADPH--hemoprotein reductase] + H2O + H(+). The enzyme catalyses 3-hydroxyoctadecanoate + reduced [NADPH--hemoprotein reductase] + O2 = 3,18-dihydroxyoctadecanoate + oxidized [NADPH--hemoprotein reductase] + H2O + H(+). It catalyses the reaction phylloquinone + reduced [NADPH--hemoprotein reductase] + O2 = omega-hydroxyphylloquinone + oxidized [NADPH--hemoprotein reductase] + H2O + H(+). It carries out the reaction menaquinone-4 + reduced [NADPH--hemoprotein reductase] + O2 = omega-hydroxymenaquinone-4 + oxidized [NADPH--hemoprotein reductase] + H2O + H(+). The catalysed reaction is 2-hexyl-5-pentylresorcinol + reduced [NADPH--hemoprotein reductase] + O2 = 2-hexyl-5-(5-hydroxypentyl)resorcinol + oxidized [NADPH--hemoprotein reductase] + H2O + H(+). The enzyme catalyses 2-hexyl-5-heptylresorcinol + reduced [NADPH--hemoprotein reductase] + O2 = 2-hexyl-5-(7-hydroxyheptyl)resorcinol + oxidized [NADPH--hemoprotein reductase] + H2O + H(+). It catalyses the reaction 12-hydroxy-(5Z,8Z,10E,14Z)-eicosatetraenoate + reduced [NADPH--hemoprotein reductase] + O2 = 12,20-dihydroxy-(5Z,8Z,10E,14Z)-eicosatetraenoate + oxidized [NADPH--hemoprotein reductase] + H2O + H(+). It carries out the reaction 15-hydroxy-(5Z,8Z,11Z,13E)-eicosatetraenoate + reduced [NADPH--hemoprotein reductase] + O2 = 15,20-dihydroxy-(5Z,8Z,11Z,13E)-eicosatetraenoate + oxidized [NADPH--hemoprotein reductase] + H2O + H(+). It functions in the pathway lipid metabolism; arachidonate metabolism. The protein operates within lipid metabolism; oxylipin biosynthesis. It participates in cofactor degradation; phylloquinone degradation. Its pathway is xenobiotic degradation. Its activity is regulated as follows. Inhibition of the long-chain fatty acid omega-monooxygenase activity by 4-hydroxynonenal (4-HNE) conjugation. Functionally, a cytochrome P450 monooxygenase involved in the metabolism of various endogenous substrates, including fatty acids and their oxygenated derivatives (oxylipins). Mechanistically, uses molecular oxygen inserting one oxygen atom into a substrate, and reducing the second into a water molecule, with two electrons provided by NADPH via cytochrome P450 reductase (CPR; NADPH-ferrihemoprotein reductase). Catalyzes with high efficiency the oxidation of the terminal carbon (omega-oxidation) of 3-hydroxy fatty acids, such as 3-hydroxyhexadecanoic and 3-hydroxyoctadecanoic acids, likely participating in the biosynthesis of long-chain 3-hydroxydicarboxylic acids. Omega-hydroxylates and inactivates phylloquinone (vitamin K1), and menaquinone-4 (MK-4, a form of vitamin K2), both acting as cofactors in blood coagulation. Metabolizes with low efficiciency fatty acids, including (5Z,8Z,11Z,14Z)-eicosatetraenoic acid (arachidonate) and its oxygenated metabolite 8-hydroxyeicosatetraenoic acid (8-HETE). Catalyzes N- and O-demethylation of drugs such as erythromycin, benzphetamine, ethylmorphine, chlorpromazine, imipramine and verapamil. Catalyzes the oxidation of dialkylresorcinol 2. The protein is Cytochrome P450 4F11 of Homo sapiens (Human).